The sequence spans 244 residues: Isoprenyl transferase (244 aa).

The active site involves Asp-20. Residue Asp-20 coordinates Mg(2+). Residues 21–24 (GNGR), Trp-25, Arg-33, His-37, and 65–67 (SSE) each bind substrate. The active-site Proton acceptor is Asn-68. Residues Trp-69, Arg-71, Arg-188, and 194–196 (RIS) contribute to the substrate site. A Mg(2+)-binding site is contributed by Glu-207.

This sequence belongs to the UPP synthase family. Homodimer. Mg(2+) serves as cofactor.

Functionally, catalyzes the condensation of isopentenyl diphosphate (IPP) with allylic pyrophosphates generating different type of terpenoids. This is Isoprenyl transferase from Rhodopirellula baltica (strain DSM 10527 / NCIMB 13988 / SH1).